The chain runs to 308 residues: Glycine--tRNA ligase alpha subunit (308 aa).

It belongs to the class-II aminoacyl-tRNA synthetase family. Tetramer of two alpha and two beta subunits.

It localises to the cytoplasm. The enzyme catalyses tRNA(Gly) + glycine + ATP = glycyl-tRNA(Gly) + AMP + diphosphate. This chain is Glycine--tRNA ligase alpha subunit, found in Streptococcus pyogenes serotype M3 (strain SSI-1).